Consider the following 599-residue polypeptide: Elongation factor 4 (599 aa).

The tr-type G domain maps to 4–186 (KFIRNFSIIA…AIIKHVPPPL (183 aa)). Residues 16–21 (DHGKST) and 133–136 (NKID) each bind GTP.

Belongs to the TRAFAC class translation factor GTPase superfamily. Classic translation factor GTPase family. LepA subfamily.

It localises to the cell membrane. The catalysed reaction is GTP + H2O = GDP + phosphate + H(+). In terms of biological role, required for accurate and efficient protein synthesis under certain stress conditions. May act as a fidelity factor of the translation reaction, by catalyzing a one-codon backward translocation of tRNAs on improperly translocated ribosomes. Back-translocation proceeds from a post-translocation (POST) complex to a pre-translocation (PRE) complex, thus giving elongation factor G a second chance to translocate the tRNAs correctly. Binds to ribosomes in a GTP-dependent manner. The polypeptide is Elongation factor 4 (Ureaplasma parvum serovar 3 (strain ATCC 27815 / 27 / NCTC 11736)).